Reading from the N-terminus, the 366-residue chain is Isopentenyl-diphosphate delta-isomerase (366 aa).

6–7 (RK) is a substrate binding site. FMN-binding positions include Thr63, 64-66 (GMT), Ser94, and Asn123. 94-96 (SQR) is a substrate binding site. Position 158 (Gln158) interacts with substrate. A Mg(2+)-binding site is contributed by Glu159. Residues Lys191, Ser216, Thr221, 273–275 (GIR), and 294–295 (AN) each bind FMN.

This sequence belongs to the IPP isomerase type 2 family. In terms of assembly, homooctamer. Dimer of tetramers. FMN is required as a cofactor. Requires NADPH as cofactor. The cofactor is Mg(2+).

Its subcellular location is the cytoplasm. The catalysed reaction is isopentenyl diphosphate = dimethylallyl diphosphate. Functionally, involved in the biosynthesis of isoprenoids. Catalyzes the 1,3-allylic rearrangement of the homoallylic substrate isopentenyl (IPP) to its allylic isomer, dimethylallyl diphosphate (DMAPP). This chain is Isopentenyl-diphosphate delta-isomerase, found in Metallosphaera sedula (strain ATCC 51363 / DSM 5348 / JCM 9185 / NBRC 15509 / TH2).